Consider the following 151-residue polypeptide: Transcriptional repressor NrdR (151 aa).

A zinc finger lies at 3–34 (CPYCGYIEDRVIDSRPTDEGSAIRRRRECSKC). Residues 49 to 139 (IMVIKKDKSR…VYRQFKDINT (91 aa)) enclose the ATP-cone domain.

Belongs to the NrdR family. Zn(2+) serves as cofactor.

Its function is as follows. Negatively regulates transcription of bacterial ribonucleotide reductase nrd genes and operons by binding to NrdR-boxes. The polypeptide is Transcriptional repressor NrdR (Acetivibrio thermocellus (strain ATCC 27405 / DSM 1237 / JCM 9322 / NBRC 103400 / NCIMB 10682 / NRRL B-4536 / VPI 7372) (Clostridium thermocellum)).